A 313-amino-acid polypeptide reads, in one-letter code: Ribose-phosphate pyrophosphokinase (313 aa).

Residues 37–39 and 96–97 contribute to the ATP site; these read DGE and RQ. His131 and Asp170 together coordinate Mg(2+). The active site involves Lys193. D-ribose 5-phosphate-binding positions include Arg195, Asp219, and 223-227; that span reads DTAGT.

The protein belongs to the ribose-phosphate pyrophosphokinase family. Class I subfamily. In terms of assembly, homohexamer. Mg(2+) serves as cofactor.

Its subcellular location is the cytoplasm. The catalysed reaction is D-ribose 5-phosphate + ATP = 5-phospho-alpha-D-ribose 1-diphosphate + AMP + H(+). Its pathway is metabolic intermediate biosynthesis; 5-phospho-alpha-D-ribose 1-diphosphate biosynthesis; 5-phospho-alpha-D-ribose 1-diphosphate from D-ribose 5-phosphate (route I): step 1/1. Involved in the biosynthesis of the central metabolite phospho-alpha-D-ribosyl-1-pyrophosphate (PRPP) via the transfer of pyrophosphoryl group from ATP to 1-hydroxyl of ribose-5-phosphate (Rib-5-P). The polypeptide is Ribose-phosphate pyrophosphokinase (Pseudomonas putida (strain ATCC 47054 / DSM 6125 / CFBP 8728 / NCIMB 11950 / KT2440)).